The sequence spans 124 residues: Small ribosomal subunit protein bS16 (124 aa).

Residues 88 to 124 (VPEQTKQAQPKAKAQERLREAEEKARAAAEAAASAEG) form a disordered region. Positions 100–114 (KAQERLREAEEKARA) are enriched in basic and acidic residues. The span at 115-124 (AAEAAASAEG) shows a compositional bias: low complexity.

The protein belongs to the bacterial ribosomal protein bS16 family.

In Rhodospirillum rubrum (strain ATCC 11170 / ATH 1.1.1 / DSM 467 / LMG 4362 / NCIMB 8255 / S1), this protein is Small ribosomal subunit protein bS16.